Here is a 1547-residue protein sequence, read N- to C-terminus: Fatty acid synthase subunit alpha (1547 aa).

The interval 94–121 is disordered; the sequence is TLPEAHPPPPIDSHQEPSTQTQATHRSA. Polar residues predominate over residues 109 to 118; the sequence is EPSTQTQATH. The region spanning 145-221 is the Carrier domain; sequence LPVSTIVRSL…ETMSIGHNGR (77 aa). Residue S180 is modified to O-(pantetheine 4'-phosphoryl)serine. Residues 563 to 798 are ketoreductase (KR) domain; sequence GKNVLITGAG…ATLMGGTITT (236 aa). The 473-residue stretch at 1004-1476 folds into the Ketosynthase family 3 (KS3) domain; that stretch reads KESLQEIVLQ…QKGSQAILIH (473 aa). Catalysis depends on for beta-ketoacyl synthase activity residues C1190 and H1442.

This sequence belongs to the thiolase-like superfamily. Fungal fatty acid synthetase subunit alpha family. Pantetheine 4'-phosphate serves as cofactor.

The enzyme catalyses acetyl-CoA + n malonyl-CoA + 2n NADPH + 4n H(+) = a long-chain-acyl-CoA + n CoA + n CO2 + 2n NADP(+).. It carries out the reaction a fatty acyl-[ACP] + malonyl-[ACP] + H(+) = a 3-oxoacyl-[ACP] + holo-[ACP] + CO2. It catalyses the reaction a (3R)-hydroxyacyl-[ACP] + NADP(+) = a 3-oxoacyl-[ACP] + NADPH + H(+). Its pathway is mycotoxin biosynthesis; HC-toxin biosynthesis. Its function is as follows. Fatty acid synthase alpha subunit, part of the diffuse TOX2 gene cluster that mediates the biosynthesis of the HC-toxin, cyclic tetrapeptide of structure cyclo(D-Pro-L-Ala-D-Ala-L-Aeo), where Aeo stands for 2-amino-9,10-epoxi-8-oxodecanoic acid. HC-toxin is a determinant of specificity and virulence in the interaction between the producing fungus and its host, maize. TOXH contribute to the synthesis of the decanoic backbone of 2-amino-9,10-epoxi-8-oxodecanoic acid, an essential precursor for the production of the major forms of HC-toxin by the non-ribosomal peptide synthetase HTS1. This Cochliobolus carbonum (Maize leaf spot fungus) protein is Fatty acid synthase subunit alpha.